We begin with the raw amino-acid sequence, 312 residues long: Thioredoxin reductase (312 aa).

33-43 (EGFFSGIAGGQ) is an FAD binding site. A disulfide bond links Cys-138 and Cys-141. 283–292 (DVQDKYYRQA) serves as a coordination point for FAD.

It belongs to the class-II pyridine nucleotide-disulfide oxidoreductase family. As to quaternary structure, homodimer. FAD serves as cofactor.

It localises to the cytoplasm. It catalyses the reaction [thioredoxin]-dithiol + NADP(+) = [thioredoxin]-disulfide + NADPH + H(+). This chain is Thioredoxin reductase (trxB), found in Chlamydia trachomatis serovar D (strain ATCC VR-885 / DSM 19411 / UW-3/Cx).